The primary structure comprises 263 residues: Zinc transporter ZupT (263 aa).

A run of 5 helical transmembrane segments spans residues 1–21 (MLFA…GGLI), 37–57 (LGFS…PGAF), 68–88 (GGSW…AIID), 116–136 (MMKM…PEGF), and 138–158 (TFLA…AIAI). Positions 131 and 134 each coordinate Fe(2+). Glu134 is a binding site for Zn(2+). Residue His159 coordinates Zn(2+). Fe(2+)-binding residues include Asn160, Glu163, and Glu192. Glu163 contributes to the Zn(2+) binding site. 3 helical membrane passes run 184 to 204 (WATL…LLLM), 206 to 226 (FIGP…MVFI), and 243 to 263 (TAIY…LLFI).

Belongs to the ZIP transporter (TC 2.A.5) family. ZupT subfamily.

It is found in the cell membrane. It carries out the reaction Zn(2+)(in) = Zn(2+)(out). Mediates zinc uptake. May also transport other divalent cations. This Corynebacterium glutamicum (strain ATCC 13032 / DSM 20300 / JCM 1318 / BCRC 11384 / CCUG 27702 / LMG 3730 / NBRC 12168 / NCIMB 10025 / NRRL B-2784 / 534) protein is Zinc transporter ZupT.